The following is a 32-amino-acid chain: Ribulose bisphosphate carboxylase/oxygenase activase, chloroplastic (32 aa).

The disordered stretch occupies residues 13–32; sequence FGALREGPPTFEQPAMTIEK.

Belongs to the RuBisCO activase family.

The protein localises to the plastid. It localises to the chloroplast stroma. Activation of RuBisCO (ribulose-1,5-bisphosphate carboxylase/oxygenase; EC 4.1.1.39) involves the ATP-dependent carboxylation of the epsilon-amino group of lysine leading to a carbamate structure. This Populus euphratica (Euphrates poplar) protein is Ribulose bisphosphate carboxylase/oxygenase activase, chloroplastic.